We begin with the raw amino-acid sequence, 707 residues long: Ribosomal RNA large subunit methyltransferase K/L (707 aa).

The THUMP domain occupies 43 to 154; sequence QIYRCCLWSR…KDKAILGVDM (112 aa).

It belongs to the methyltransferase superfamily. RlmKL family.

It is found in the cytoplasm. The catalysed reaction is guanosine(2445) in 23S rRNA + S-adenosyl-L-methionine = N(2)-methylguanosine(2445) in 23S rRNA + S-adenosyl-L-homocysteine + H(+). It catalyses the reaction guanosine(2069) in 23S rRNA + S-adenosyl-L-methionine = N(2)-methylguanosine(2069) in 23S rRNA + S-adenosyl-L-homocysteine + H(+). Its function is as follows. Specifically methylates the guanine in position 2445 (m2G2445) and the guanine in position 2069 (m7G2069) of 23S rRNA. The polypeptide is Ribosomal RNA large subunit methyltransferase K/L (Vibrio parahaemolyticus serotype O3:K6 (strain RIMD 2210633)).